The chain runs to 122 residues: Large ribosomal subunit protein uL14 (122 aa).

It belongs to the universal ribosomal protein uL14 family. As to quaternary structure, part of the 50S ribosomal subunit. Forms a cluster with proteins L3 and L19. In the 70S ribosome, L14 and L19 interact and together make contacts with the 16S rRNA in bridges B5 and B8.

Its function is as follows. Binds to 23S rRNA. Forms part of two intersubunit bridges in the 70S ribosome. This Halalkalibacterium halodurans (strain ATCC BAA-125 / DSM 18197 / FERM 7344 / JCM 9153 / C-125) (Bacillus halodurans) protein is Large ribosomal subunit protein uL14.